A 499-amino-acid polypeptide reads, in one-letter code: Probable cytosol aminopeptidase (499 aa).

Residues Lys269 and Asp274 each contribute to the Mn(2+) site. Lys281 is an active-site residue. The Mn(2+) site is built by Asp292, Asp351, and Glu353. The active site involves Arg355.

This sequence belongs to the peptidase M17 family. Mn(2+) serves as cofactor.

Its subcellular location is the cytoplasm. It carries out the reaction Release of an N-terminal amino acid, Xaa-|-Yaa-, in which Xaa is preferably Leu, but may be other amino acids including Pro although not Arg or Lys, and Yaa may be Pro. Amino acid amides and methyl esters are also readily hydrolyzed, but rates on arylamides are exceedingly low.. The enzyme catalyses Release of an N-terminal amino acid, preferentially leucine, but not glutamic or aspartic acids.. Presumably involved in the processing and regular turnover of intracellular proteins. Catalyzes the removal of unsubstituted N-terminal amino acids from various peptides. The chain is Probable cytosol aminopeptidase from Actinobacillus pleuropneumoniae serotype 5b (strain L20).